A 124-amino-acid chain; its full sequence is Small ribosomal subunit protein uS12cz/uS12cy (124 aa).

Belongs to the universal ribosomal protein uS12 family. Part of the 30S ribosomal subunit.

The protein localises to the plastid. It is found in the chloroplast. In terms of biological role, with S4 and S5 plays an important role in translational accuracy. Located at the interface of the 30S and 50S subunits. The protein is Small ribosomal subunit protein uS12cz/uS12cy (rps12-A) of Zea mays (Maize).